The chain runs to 373 residues: Enoyl-[acyl-carrier-protein] reductase, mitochondrial (373 aa).

The transit peptide at 1–53 (MWVCSTLWRVRTPARQWRGLLPASGCHGPAASSYSASAEPARVRALVYGHHGD) directs the protein to the mitochondrion. Lys61 bears the N6-acetyllysine; alternate mark. An N6-succinyllysine; alternate modification is found at Lys61. The Proton donor role is filled by Tyr94. NADP(+) is bound by residues Asn167, 193 to 196 (NSGV), and 216 to 218 (RDR). An N6-acetyllysine; alternate mark is found at Lys252 and Lys267. Residues Lys252 and Lys267 each carry the N6-succinyllysine; alternate modification. Residues 285–288 (YGGM) and 310–312 (FWL) contribute to the NADP(+) site. Lys316 is modified (N6-succinyllysine). Position 368 (Lys368) interacts with NADP(+).

Belongs to the zinc-containing alcohol dehydrogenase family. Quinone oxidoreductase subfamily. In terms of assembly, homodimer. Isoform 2 interacts with PPARA in the nucleus and increases its activity. Highly expressed in skeletal and heart muscle. Expressed at lower level in placenta, liver, kidney and pancreas. Weakly or not expressed in lung.

The protein localises to the mitochondrion. The protein resides in the cytoplasm. It is found in the nucleus. It catalyses the reaction a 2,3-saturated acyl-[ACP] + NADP(+) = a (2E)-enoyl-[ACP] + NADPH + H(+). It carries out the reaction (2E)-butenoyl-[ACP] + NADPH + H(+) = butanoyl-[ACP] + NADP(+). The catalysed reaction is (2E)-hexenoyl-[ACP] + NADPH + H(+) = hexanoyl-[ACP] + NADP(+). The enzyme catalyses (2E)-octenoyl-[ACP] + NADPH + H(+) = octanoyl-[ACP] + NADP(+). It catalyses the reaction (2E)-decenoyl-[ACP] + NADPH + H(+) = decanoyl-[ACP] + NADP(+). It carries out the reaction (2E)-dodecenoyl-[ACP] + NADPH + H(+) = dodecanoyl-[ACP] + NADP(+). The catalysed reaction is (2E)-tetradecenoyl-[ACP] + NADPH + H(+) = tetradecanoyl-[ACP] + NADP(+). The enzyme catalyses (2E)-hexadecenoyl-[ACP] + NADPH + H(+) = hexadecanoyl-[ACP] + NADP(+). Catalyzes the NADPH-dependent reduction of trans-2-enoyl thioesters in mitochondrial fatty acid synthesis (fatty acid synthesis type II). Fatty acid chain elongation in mitochondria uses acyl carrier protein (ACP) as an acyl group carrier, but the enzyme accepts both ACP and CoA thioesters as substrates in vitro. Displays a preference for medium-chain over short- and long-chain substrates. May provide the octanoyl chain used for lipoic acid biosynthesis, regulating protein lipoylation and mitochondrial respiratory activity particularly in Purkinje cells. Involved in iron homeostasis; affecting Fe-S cluster assembly and ceramide metabolism. Required for proper morphology and bioenergetic functions of mitochondria. Required for maintenance of neurons. The sequence is that of Enoyl-[acyl-carrier-protein] reductase, mitochondrial (MECR) from Homo sapiens (Human).